The sequence spans 138 residues: Small ribosomal subunit protein uS12m (138 aa).

Residues 1-29 constitute a mitochondrion transit peptide; that stretch reads MSWSGLLHGLNTSLTCGPALVPRLWATCS. The disordered stretch occupies residues 36 to 56; the sequence is MHRLGPPKRPPRKLGPTEGRP.

The protein belongs to the universal ribosomal protein uS12 family. Component of the mitochondrial small ribosomal subunit (mt-SSU). Mature mammalian 55S mitochondrial ribosomes consist of a small (28S) and a large (39S) subunit. The 28S small subunit contains a 12S ribosomal RNA (12S mt-rRNA) and 30 different proteins. The 39S large subunit contains a 16S rRNA (16S mt-rRNA), a copy of mitochondrial valine transfer RNA (mt-tRNA(Val)), which plays an integral structural role, and 52 different proteins.

Its subcellular location is the mitochondrion. In Homo sapiens (Human), this protein is Small ribosomal subunit protein uS12m (MRPS12).